The primary structure comprises 282 residues: Bifunctional protein FolD (282 aa).

NADP(+) contacts are provided by residues 164 to 166 (GAS), isoleucine 189, and isoleucine 230.

Belongs to the tetrahydrofolate dehydrogenase/cyclohydrolase family. Homodimer.

It catalyses the reaction (6R)-5,10-methylene-5,6,7,8-tetrahydrofolate + NADP(+) = (6R)-5,10-methenyltetrahydrofolate + NADPH. It carries out the reaction (6R)-5,10-methenyltetrahydrofolate + H2O = (6R)-10-formyltetrahydrofolate + H(+). It participates in one-carbon metabolism; tetrahydrofolate interconversion. In terms of biological role, catalyzes the oxidation of 5,10-methylenetetrahydrofolate to 5,10-methenyltetrahydrofolate and then the hydrolysis of 5,10-methenyltetrahydrofolate to 10-formyltetrahydrofolate. In Campylobacter jejuni subsp. jejuni serotype O:6 (strain 81116 / NCTC 11828), this protein is Bifunctional protein FolD.